A 283-amino-acid polypeptide reads, in one-letter code: Bifunctional protein FolD (283 aa).

NADP(+) contacts are provided by residues 163–165 (GRS), S188, and I229.

This sequence belongs to the tetrahydrofolate dehydrogenase/cyclohydrolase family. In terms of assembly, homodimer.

It carries out the reaction (6R)-5,10-methylene-5,6,7,8-tetrahydrofolate + NADP(+) = (6R)-5,10-methenyltetrahydrofolate + NADPH. The catalysed reaction is (6R)-5,10-methenyltetrahydrofolate + H2O = (6R)-10-formyltetrahydrofolate + H(+). Its pathway is one-carbon metabolism; tetrahydrofolate interconversion. Its function is as follows. Catalyzes the oxidation of 5,10-methylenetetrahydrofolate to 5,10-methenyltetrahydrofolate and then the hydrolysis of 5,10-methenyltetrahydrofolate to 10-formyltetrahydrofolate. The sequence is that of Bifunctional protein FolD from Campylobacter concisus (strain 13826).